The chain runs to 378 residues: Monomethylxanthine methyltransferase 1 (378 aa).

Residues Tyr18, Cys61, Asn66, Asp100, Leu101, Ser139, Phe140, and Cys156 each coordinate S-adenosyl-L-homocysteine. Theobromine is bound by residues Tyr157, His160, and Trp161. Residues Asn178, Asp260, Phe262, and Asn263 each coordinate Mg(2+). Residue Tyr362 coordinates theobromine.

This sequence belongs to the methyltransferase superfamily. Type-7 methyltransferase family. Mg(2+) serves as cofactor. As to expression, expressed, at low levels, in stems, young leaves, floral buds and immature fruits (grains), but not in roots, old leaves and mature fruits.

Its subcellular location is the cytoplasm. The enzyme catalyses 7-methylxanthine + S-adenosyl-L-methionine = theobromine + S-adenosyl-L-homocysteine + H(+). It participates in alkaloid biosynthesis. Its function is as follows. Involved in the biosynthesis of caffeine. Catalyzes the conversion of 7-methylxanthine (7mX) to theobromine and of paraxanthine to caffeine. Has a 5-fold preference for 7mX. In Coffea arabica (Arabian coffee), this protein is Monomethylxanthine methyltransferase 1.